The chain runs to 186 residues: MKKTVLALMFSCGMVASAFAHNHAVEHKHTGEMLEVKVELLDPAKGNQEIGKVVITESAYGLVFTPELKNLTAGLHGFHIHQNPSCDAKEKDGKLVAGLAAGGHWDPKNAGKHGYPWSDDAHLGDLPALAVNQDGTANNPVLAPRLKHLDDVKGRSLMIHEGGDNHDDHPAPLGGGGPRMACGVIK.

The signal sequence occupies residues 1–20 (MKKTVLALMFSCGMVASAFA). The Cu cation site is built by His79, His81, and His104. A disulfide bridge links Cys86 with Cys182. Residues His104, His113, His122, and Asp125 each contribute to the Zn(2+) site. His160 is a binding site for Cu cation.

The protein belongs to the Cu-Zn superoxide dismutase family. As to quaternary structure, homodimer. Requires Cu cation as cofactor. It depends on Zn(2+) as a cofactor.

It is found in the periplasm. The enzyme catalyses 2 superoxide + 2 H(+) = H2O2 + O2. In terms of biological role, destroys radicals which are normally produced within the cells and which are toxic to biological systems. The sequence is that of Superoxide dismutase [Cu-Zn] (sodC) from Pasteurella multocida (strain Pm70).